The primary structure comprises 60 residues: Large ribosomal subunit protein bL32 (60 aa).

Over residues 1–16 (MAVPRRKTSPSRRGMR) the composition is skewed to basic residues. A disordered region spans residues 1–60 (MAVPRRKTSPSRRGMRRSADAIKKPTYVEDKDSGELRRPHHLDLKTGMYKGRQVLKKKES). Basic and acidic residues predominate over residues 17–44 (RSADAIKKPTYVEDKDSGELRRPHHLDL).

This sequence belongs to the bacterial ribosomal protein bL32 family.

In Bradyrhizobium diazoefficiens (strain JCM 10833 / BCRC 13528 / IAM 13628 / NBRC 14792 / USDA 110), this protein is Large ribosomal subunit protein bL32.